Reading from the N-terminus, the 104-residue chain is Viral histone-like protein (104 aa).

Belongs to the bacterial histone-like protein family. As to quaternary structure, homodimer.

It is found in the virion. Its activity is regulated as follows. Stilbene derivatives SD1 and SD4 disrupt the binding between pA104R and DNA and inhibit the viral replication in primary alveolar macrophages. In terms of biological role, DNA-binding protein that plays a critical role in nucleoid compaction, genome replication and DNA replication and transcription. Binds to both ssDNA and dsDNA with a binding site covering about 15 nucleotides. Displays DNA-supercoiling activity only when associated with the viral DNA topoisomerase 2. The chain is Viral histone-like protein from African swine fever virus (strain Badajoz 1971 Vero-adapted) (Ba71V).